Reading from the N-terminus, the 78-residue chain is Small ribosomal subunit protein bS18 (78 aa).

It belongs to the bacterial ribosomal protein bS18 family. Part of the 30S ribosomal subunit. Forms a tight heterodimer with protein bS6.

Its function is as follows. Binds as a heterodimer with protein bS6 to the central domain of the 16S rRNA, where it helps stabilize the platform of the 30S subunit. The sequence is that of Small ribosomal subunit protein bS18 from Pseudothermotoga lettingae (strain ATCC BAA-301 / DSM 14385 / NBRC 107922 / TMO) (Thermotoga lettingae).